Here is a 223-residue protein sequence, read N- to C-terminus: Coiled-coil domain-containing protein 70 (223 aa).

Residues 129 to 153 adopt a coiled-coil conformation; it reads NALWERDRNLLQEDKALWEEEKALW. Residues 199–223 form a disordered region; sequence EQRHQNGPYNANEEPQSTSFPRGRA. Residues 203 to 223 show a composition bias toward polar residues; the sequence is QNGPYNANEEPQSTSFPRGRA.

The sequence is that of Coiled-coil domain-containing protein 70 from Mus musculus (Mouse).